The sequence spans 229 residues: ATP synthase subunit a (229 aa).

Helical transmembrane passes span 25-45, 82-102, 104-124, 142-162, 181-201, and 202-222; these read ADAIAYTWLIIALLLILSMLA, FFPLIATLAIFILVSNLIGLV, GFFPPTANINTTAACAVIVFV, FLGPILWLAPMMFFIEVIGHF, LVLMIFFGLAPFLVPLPMMLM, and GVLVSFIQAFVFMLLAMIYIQ.

Belongs to the ATPase A chain family. In terms of assembly, F-type ATPases have 2 components, CF(1) - the catalytic core - and CF(0) - the membrane proton channel. CF(1) has five subunits: alpha(3), beta(3), gamma(1), delta(1), epsilon(1). CF(0) has three main subunits: a(1), b(2) and c(9-12). The alpha and beta chains form an alternating ring which encloses part of the gamma chain. CF(1) is attached to CF(0) by a central stalk formed by the gamma and epsilon chains, while a peripheral stalk is formed by the delta and b chains.

Its subcellular location is the cell inner membrane. Its function is as follows. Key component of the proton channel; it plays a direct role in the translocation of protons across the membrane. The polypeptide is ATP synthase subunit a (Geotalea uraniireducens (strain Rf4) (Geobacter uraniireducens)).